The chain runs to 94 residues: Integration host factor subunit beta (94 aa).

Belongs to the bacterial histone-like protein family. In terms of assembly, heterodimer of an alpha and a beta chain.

Functionally, this protein is one of the two subunits of integration host factor, a specific DNA-binding protein that functions in genetic recombination as well as in transcriptional and translational control. This chain is Integration host factor subunit beta, found in Azorhizobium caulinodans (strain ATCC 43989 / DSM 5975 / JCM 20966 / LMG 6465 / NBRC 14845 / NCIMB 13405 / ORS 571).